A 602-amino-acid chain; its full sequence is Probable translation initiation factor IF-2 (602 aa).

The 216-residue stretch at 15–230 folds into the tr-type G domain; that stretch reads LRTPIVAVLG…VLMGLSQRYL (216 aa). A G1 region spans residues 24–31; sequence GHVDHGKT. 24 to 31 is a GTP binding site; sequence GHVDHGKT. Residues 49–53 form a G2 region; it reads AITQH. The G3 stretch occupies residues 86-89; that stretch reads DTPG. GTP is bound by residues 86-90 and 140-143; these read DTPGH and NKID. The interval 140–143 is G4; that stretch reads NKID. Residues 208 to 210 are G5; it reads SAE.

Belongs to the TRAFAC class translation factor GTPase superfamily. Classic translation factor GTPase family. IF-2 subfamily.

Function in general translation initiation by promoting the binding of the formylmethionine-tRNA to ribosomes. Seems to function along with eIF-2. The protein is Probable translation initiation factor IF-2 of Natronomonas pharaonis (strain ATCC 35678 / DSM 2160 / CIP 103997 / JCM 8858 / NBRC 14720 / NCIMB 2260 / Gabara) (Halobacterium pharaonis).